An 86-amino-acid polypeptide reads, in one-letter code: MFTSTLLAAATTPLQWSPTVGLIIIIANIIAIAFGKSTIKYPNAEPALPSSNLFGGFGLPALLATTAFGHILGVGAVLGLHNLGRI.

The next 2 membrane-spanning stretches (helical) occupy residues 14 to 34 (LQWS…AIAF) and 57 to 77 (FGLP…VGAV).

The protein belongs to the PsaG/PsaK family.

It localises to the cellular thylakoid membrane. In Nostoc punctiforme (strain ATCC 29133 / PCC 73102), this protein is Photosystem I reaction center subunit PsaK.